A 358-amino-acid chain; its full sequence is L-lysine 3-hydroxylase (358 aa).

H178, E180, and H314 together coordinate Fe cation. R328 is a binding site for 2-oxoglutarate.

This sequence belongs to the clavaminate synthase family. Fe(2+) is required as a cofactor.

It carries out the reaction L-lysine + 2-oxoglutarate + O2 = (3S)-3-hydroxy-L-lysine + succinate + CO2. In terms of biological role, alpha-ketoglutarate-dependent dioxygenase that in vitro catalyzes the regio- and stereoselective hydroxylation of L-lysine, leading to (3S)-3-hydroxy-L-lysine. Can also use (5R)-5-hydroxy-L-lysine as substrate, but neither D-lysine nor L-ornithine. This is L-lysine 3-hydroxylase from Catenulispora acidiphila (strain DSM 44928 / JCM 14897 / NBRC 102108 / NRRL B-24433 / ID139908).